Here is a 26-residue protein sequence, read N- to C-terminus: Hemocyanin subunit B (26 aa).

It belongs to the tyrosinase family. Hemocyanin subfamily. In terms of tissue distribution, hemolymph.

It localises to the secreted. The protein resides in the extracellular space. In terms of biological role, hemocyanins are copper-containing oxygen carriers occurring freely dissolved in the hemolymph of many mollusks and arthropods. The protein is Hemocyanin subunit B of Carcinus maenas (Common shore crab).